Here is an 89-residue protein sequence, read N- to C-terminus: uncharacterized protein (89 aa).

To M.tuberculosis Rv3402c.

This is an uncharacterized protein from Mycobacterium tuberculosis (strain CDC 1551 / Oshkosh).